The primary structure comprises 429 residues: Enolase (429 aa).

Gln162 serves as a coordination point for (2R)-2-phosphoglycerate. Glu204 serves as the catalytic Proton donor. Positions 241, 288, and 315 each coordinate Mg(2+). 4 residues coordinate (2R)-2-phosphoglycerate: Lys340, Arg369, Ser370, and Lys391. The Proton acceptor role is filled by Lys340.

This sequence belongs to the enolase family. Mg(2+) serves as cofactor.

The protein resides in the cytoplasm. The protein localises to the secreted. Its subcellular location is the cell surface. The enzyme catalyses (2R)-2-phosphoglycerate = phosphoenolpyruvate + H2O. It functions in the pathway carbohydrate degradation; glycolysis; pyruvate from D-glyceraldehyde 3-phosphate: step 4/5. Functionally, catalyzes the reversible conversion of 2-phosphoglycerate (2-PG) into phosphoenolpyruvate (PEP). It is essential for the degradation of carbohydrates via glycolysis. This Bacteroides fragilis (strain ATCC 25285 / DSM 2151 / CCUG 4856 / JCM 11019 / LMG 10263 / NCTC 9343 / Onslow / VPI 2553 / EN-2) protein is Enolase.